A 131-amino-acid chain; its full sequence is Phosphoribosyl-AMP cyclohydrolase (131 aa).

Mg(2+) is bound at residue aspartate 78. Cysteine 79 serves as a coordination point for Zn(2+). Residues aspartate 80 and aspartate 82 each contribute to the Mg(2+) site. Zn(2+) contacts are provided by cysteine 96 and cysteine 103.

The protein belongs to the PRA-CH family. In terms of assembly, homodimer. The cofactor is Mg(2+). Zn(2+) serves as cofactor.

The protein resides in the cytoplasm. The catalysed reaction is 1-(5-phospho-beta-D-ribosyl)-5'-AMP + H2O = 1-(5-phospho-beta-D-ribosyl)-5-[(5-phospho-beta-D-ribosylamino)methylideneamino]imidazole-4-carboxamide. The protein operates within amino-acid biosynthesis; L-histidine biosynthesis; L-histidine from 5-phospho-alpha-D-ribose 1-diphosphate: step 3/9. In terms of biological role, catalyzes the hydrolysis of the adenine ring of phosphoribosyl-AMP. The protein is Phosphoribosyl-AMP cyclohydrolase of Neisseria gonorrhoeae (strain ATCC 700825 / FA 1090).